An 803-amino-acid polypeptide reads, in one-letter code: Carbon monoxide dehydrogenase large chain (803 aa).

Residue Arg384 is modified to 4-hydroxyarginine. Cu(+) is bound at residue Cys385. Glu757 is a Mo-molybdopterin cytosine dinucleotide binding site.

Dimer of heterotrimers. Each heterotrimer consists of a large, a medium and a small subunit. Cu(+) is required as a cofactor. It depends on Mo-molybdopterin cytosine dinucleotide as a cofactor.

It catalyses the reaction CO + a quinone + H2O = a quinol + CO2. Its function is as follows. Catalyzes the oxidation of carbon monoxide to carbon dioxide. This chain is Carbon monoxide dehydrogenase large chain (cutL), found in Hydrogenophaga pseudoflava (Pseudomonas carboxydoflava).